Here is a 155-residue protein sequence, read N- to C-terminus: D-aminoacyl-tRNA deacylase (155 aa).

The short motif at 137 to 138 (GP) is the Gly-cisPro motif, important for rejection of L-amino acids element.

This sequence belongs to the DTD family. As to quaternary structure, homodimer.

The protein localises to the cytoplasm. It catalyses the reaction glycyl-tRNA(Ala) + H2O = tRNA(Ala) + glycine + H(+). The enzyme catalyses a D-aminoacyl-tRNA + H2O = a tRNA + a D-alpha-amino acid + H(+). Its function is as follows. An aminoacyl-tRNA editing enzyme that deacylates mischarged D-aminoacyl-tRNAs. Also deacylates mischarged glycyl-tRNA(Ala), protecting cells against glycine mischarging by AlaRS. Acts via tRNA-based rather than protein-based catalysis; rejects L-amino acids rather than detecting D-amino acids in the active site. By recycling D-aminoacyl-tRNA to D-amino acids and free tRNA molecules, this enzyme counteracts the toxicity associated with the formation of D-aminoacyl-tRNA entities in vivo and helps enforce protein L-homochirality. The sequence is that of D-aminoacyl-tRNA deacylase from Paracidovorax citrulli (strain AAC00-1) (Acidovorax citrulli).